A 224-amino-acid polypeptide reads, in one-letter code: tRNA (guanine-N(7)-)-methyltransferase (224 aa).

Positions 54, 79, 106, and 129 each coordinate S-adenosyl-L-methionine. Residue Asp-129 is part of the active site. Lys-133 and Asp-165 together coordinate substrate.

The protein belongs to the class I-like SAM-binding methyltransferase superfamily. TrmB family.

The enzyme catalyses guanosine(46) in tRNA + S-adenosyl-L-methionine = N(7)-methylguanosine(46) in tRNA + S-adenosyl-L-homocysteine. It functions in the pathway tRNA modification; N(7)-methylguanine-tRNA biosynthesis. Catalyzes the formation of N(7)-methylguanine at position 46 (m7G46) in tRNA. The chain is tRNA (guanine-N(7)-)-methyltransferase from Chlamydia trachomatis serovar D (strain ATCC VR-885 / DSM 19411 / UW-3/Cx).